A 389-amino-acid chain; its full sequence is Teichoic acid ribitol-phosphate primase (389 aa).

Belongs to the CDP-glycerol glycerophosphotransferase family.

The protein resides in the cell membrane. The catalysed reaction is 4-O-[(2R)-glycerylphospho]-N-acetyl-beta-D-mannosaminyl-(1-&gt;4)-N-acetyl-alpha-D-glucosaminyl di-trans,octa-cis-undecaprenyl diphosphate + CDP-L-ribitol = 4-O-[1-D-ribitylphospho-(2R)-1-glycerylphospho]-N-acetyl-beta-D-mannosaminyl-(1-&gt;4)-N-acetyl-alpha-D-glucosaminyl di-trans,octa-cis-undecaprenyl diphosphate + CMP + H(+). It participates in cell wall biogenesis; poly(ribitol phosphate) teichoic acid biosynthesis. Catalyzes the addition of a single ribitol phosphate unit onto the glycerol phosphate of the linkage unit, as a primer for polymerisation by TarL. This chain is Teichoic acid ribitol-phosphate primase (tarK), found in Bacillus spizizenii (strain ATCC 23059 / NRRL B-14472 / W23) (Bacillus subtilis subsp. spizizenii).